The chain runs to 80 residues: Beta-toxin KAaH2 (80 aa).

Residues 1–22 form the signal peptide; the sequence is MMKLMLFSIIVILFSLIGSIHG. An LCN-type CS-alpha/beta domain is found at 25–80; that stretch reads VPGNYPLDSSDDTYLCAPLGENPSCIQICRKHGVKYGYCYAFQCWCEYLEDKNVKI. Cystine bridges form between Cys40–Cys63, Cys49–Cys68, and Cys53–Cys70.

It belongs to the long (3 C-C) scorpion toxin superfamily. Sodium/Potassium channel inhibitor family. As to expression, expressed by the venom gland.

It localises to the secreted. In terms of biological role, weakly inhibits the vertebrate potassium channel Kv1.1/KCNA1. This is Beta-toxin KAaH2 from Androctonus australis (Sahara scorpion).